The primary structure comprises 256 residues: Zinc import ATP-binding protein ZnuC (256 aa).

The ABC transporter domain maps to 6 to 221; it reads IAAEGLSIRV…PEYRALFGTG (216 aa). Position 38–45 (38–45) interacts with ATP; sequence GPNGSGKS. Residues 237–256 form a disordered region; that stretch reads HDDDCGHDHGAEHMHPHGDR.

Belongs to the ABC transporter superfamily. Zinc importer (TC 3.A.1.15.5) family. As to quaternary structure, the complex is composed of two ATP-binding proteins (ZnuC), two transmembrane proteins (ZnuB) and a solute-binding protein (ZnuA).

The protein resides in the cell inner membrane. It catalyses the reaction Zn(2+)(out) + ATP(in) + H2O(in) = Zn(2+)(in) + ADP(in) + phosphate(in) + H(+)(in). Functionally, part of the ABC transporter complex ZnuABC involved in zinc import. Responsible for energy coupling to the transport system. The chain is Zinc import ATP-binding protein ZnuC from Ruegeria pomeroyi (strain ATCC 700808 / DSM 15171 / DSS-3) (Silicibacter pomeroyi).